The primary structure comprises 437 residues: F-box protein At3g62430 (437 aa).

An F-box domain is found at 1-49 (MDRISNLPDGVIYRVISLLSTKEATCLKYTSKNWLNLVTIIPIAVFVDS).

This Arabidopsis thaliana (Mouse-ear cress) protein is F-box protein At3g62430.